The sequence spans 489 residues: MFS-type transporter MFS19 (489 aa).

Over residues 1–12 (MAHSTAGDRDPE) the composition is skewed to basic and acidic residues. Positions 1 to 42 (MAHSTAGDRDPEVGSEQHSSIAQLHTESMSDPWGDSNSPENP) are disordered. The span at 16–41 (EQHSSIAQLHTESMSDPWGDSNSPEN) shows a compositional bias: polar residues. The helical transmembrane segment at 52-72 (FHVAIVSIFTLTANLAATMFA) threads the bilayer. 2 N-linked (GlcNAc...) asparagine glycosylation sites follow: Asn-83 and Asn-86. Helical transmembrane passes span 91–111 (AMTV…LAPL), 127–147 (VYIA…FLVF), 149–169 (FLCG…VADI), 180–200 (ALFA…GGYV), 208–228 (WTFR…MFFM), 282–302 (PIVL…FLLF), 321–341 (GLAY…FSIL), 361–381 (LILM…YGWS), 388–408 (WIVP…VVIP), 425–445 (ALAA…LVAA), and 454–474 (GWGN…PWLF).

The protein belongs to the major facilitator superfamily.

The protein resides in the cell membrane. Functionally, MFS-type efflux pump involved in the modulation susceptibility to various compounds including cumyl hydroperoxide, potassium superoxide, many singlet oxygen-generating compounds (eosin Y, rose Bengal, hematoporphyrin, methylene blue, and cercosporin), and the cell wall biosynthesis inhibitor Congo red. Involved in oxidative stress tolerance, colonization, and lesion formation. The polypeptide is MFS-type transporter MFS19 (Alternaria alternata (Alternaria rot fungus)).